We begin with the raw amino-acid sequence, 366 residues long: Anthranilate phosphoribosyltransferase (366 aa).

5-phospho-alpha-D-ribose 1-diphosphate contacts are provided by residues Gly-79, 82 to 83, Thr-87, 89 to 92, 107 to 115, and Ser-119; these read GD, NIST, and KHGNRAATS. An anthranilate-binding site is contributed by Gly-79. Residue Ser-91 participates in Mg(2+) binding. Anthranilate is bound at residue Asn-110. Anthranilate is bound at residue Arg-165. Asp-223 and Glu-224 together coordinate Mg(2+). A disordered region spans residues 342-366; sequence ESLSGKSMSMRSRTSILSPASGERV. Positions 345–359 are enriched in polar residues; it reads SGKSMSMRSRTSILS.

This sequence belongs to the anthranilate phosphoribosyltransferase family. In terms of assembly, homodimer. Requires Mg(2+) as cofactor.

It carries out the reaction N-(5-phospho-beta-D-ribosyl)anthranilate + diphosphate = 5-phospho-alpha-D-ribose 1-diphosphate + anthranilate. It functions in the pathway amino-acid biosynthesis; L-tryptophan biosynthesis; L-tryptophan from chorismate: step 2/5. Its function is as follows. Catalyzes the transfer of the phosphoribosyl group of 5-phosphorylribose-1-pyrophosphate (PRPP) to anthranilate to yield N-(5'-phosphoribosyl)-anthranilate (PRA). In Methanosarcina barkeri (strain Fusaro / DSM 804), this protein is Anthranilate phosphoribosyltransferase.